The sequence spans 364 residues: MGSTAGDVAAVVDEEACMYAMQLASSSILPMTLKNAIELGLLEVLQKEAGGGKAALAPEEVVARMPAAPGDPAAAAAMVDRMLRLLASYDVVRCQMEDRDGRYERRYSAAPVCKWLTPNEDGVSMAALALMNQDKVLMESWYYLKDAVLDGGIPFNKAYGMTAFEYHGTDSRFNRVFNEGMKNHSVIITKKLLDFYTGFEGVSTLVDVGGGVGATLHAITSRHPHISGVNFDLPHVISEAPPFPGVRHVGGDMFASVPAGDAILMKWILHDWSDAHCATLLKNCYDALPENGKVIVVECVLPVNTEATPKAQGVFHVDMIMLAHNPGGKERYEREFRELAKGAGFSGFKATYIYANAWAIEFIK.

Residue 131-137 (MNQDKVL) participates in substrate binding. Residues 163–181 (AFEYHGTDSRFNRVFNEGM) form a substrate binding region. 5 residues coordinate S-adenosyl-L-methionine: Gly209, Asp232, Asp252, Met253, and Lys266. The active-site Proton acceptor is the His270.

The protein belongs to the class I-like SAM-binding methyltransferase superfamily. Cation-independent O-methyltransferase family. COMT subfamily. As to quaternary structure, homodimer. As to expression, confined to the vascular tissues of organs undergoing lignification such as stems and roots.

The catalysed reaction is (E)-caffeate + S-adenosyl-L-methionine = (E)-ferulate + S-adenosyl-L-homocysteine + H(+). It carries out the reaction tricetin + 2 S-adenosyl-L-methionine = 3',5'-di-O-methyltricetin + 2 S-adenosyl-L-homocysteine + 2 H(+). It catalyses the reaction luteolin + S-adenosyl-L-methionine = chrysoeriol + S-adenosyl-L-homocysteine + H(+). The enzyme catalyses tricetin + S-adenosyl-L-methionine = 3'-O-methyltricetin + S-adenosyl-L-homocysteine + H(+). Its pathway is aromatic compound metabolism; phenylpropanoid biosynthesis. Its function is as follows. Catalyzes the conversion of caffeic acid to ferulic acid and of 5-hydroxyferulic acid to sinapic acid. The resulting products may subsequently be converted to the corresponding alcohols that are incorporated into lignins. Can use the flavone tricetin (5,7,3',4',5'-pentahydroxyflavone) as the preferred substrate and give rise to its 3',5'-dimethyl derivative, tricin (3',5'-dimethoxy-5,7,4'-trihydroxyflavone), as the major product, and selgin to a lower extent. Tricin exhibits potential benefits for human health including relaxant effect on smooth muscle of intestinal tissues, antioxidant effect, antihistaminic activity, and growth inhibition of human malignant breast tumor cells and colon cancer cells. Can also use luteolin, quercetin and 5-hydroxyferulic acid (5HF) as substrates. This is Caffeic acid 3-O-methyltransferase from Zea mays (Maize).